We begin with the raw amino-acid sequence, 222 residues long: Adenylate kinase (222 aa).

A propeptide (removed in mature form) is located at residue Ser2. 2 positions are modified to N-acetylserine: Ser2 and Ser3. Residue 16-21 coordinates ATP; sequence GAGKGT. The segment at 36–65 is NMP; that stretch reads ATGDMLRSQIAKGTQLGLEAKKIMDQGGLV. Residues Thr37, Arg42, 63-65, 92-95, and Gln99 each bind AMP; these read GLV and GFPR. The interval 133-170 is LID; it reads GRLIHPASGRSYHKIFNPPKEDMKDDVTGEALVQRSDD. Residues Arg134 and 143-144 each bind ATP; that span reads SY. 2 residues coordinate AMP: Arg167 and Arg178. Gln206 contributes to the ATP binding site.

Belongs to the adenylate kinase family. AK2 subfamily. Monomer.

Its subcellular location is the cytoplasm. The protein resides in the cytosol. It is found in the mitochondrion intermembrane space. The catalysed reaction is AMP + ATP = 2 ADP. Catalyzes the reversible transfer of the terminal phosphate group between ATP and AMP. Plays an important role in cellular energy homeostasis and in adenine nucleotide metabolism. Adenylate kinase activity is critical for regulation of the phosphate utilization and the AMP de novo biosynthesis pathways. In Saccharomyces cerevisiae (strain YJM789) (Baker's yeast), this protein is Adenylate kinase.